Consider the following 625-residue polypeptide: Phosphomethylpyrimidine synthase (625 aa).

Substrate contacts are provided by residues Asn231, Met260, Tyr289, His325, 345–347 (SRG), 386–389 (DGLR), and Glu425. His429 lines the Zn(2+) pocket. Residue Tyr452 participates in substrate binding. His493 provides a ligand contact to Zn(2+). The [4Fe-4S] cluster site is built by Cys573, Cys576, and Cys581.

The protein belongs to the ThiC family. Homodimer. [4Fe-4S] cluster is required as a cofactor.

It carries out the reaction 5-amino-1-(5-phospho-beta-D-ribosyl)imidazole + S-adenosyl-L-methionine = 4-amino-2-methyl-5-(phosphooxymethyl)pyrimidine + CO + 5'-deoxyadenosine + formate + L-methionine + 3 H(+). It functions in the pathway cofactor biosynthesis; thiamine diphosphate biosynthesis. In terms of biological role, catalyzes the synthesis of the hydroxymethylpyrimidine phosphate (HMP-P) moiety of thiamine from aminoimidazole ribotide (AIR) in a radical S-adenosyl-L-methionine (SAM)-dependent reaction. This Acinetobacter baumannii (strain AB0057) protein is Phosphomethylpyrimidine synthase.